Here is a 553-residue protein sequence, read N- to C-terminus: ATP synthase F(1) complex subunit alpha, mitochondrial (553 aa).

The N-terminal 43 residues, Met1–Leu43, are a transit peptide targeting the mitochondrion. Ser53 and Ser65 each carry phosphoserine. Residue Ser76 is modified to Phosphoserine; alternate. Ser76 carries O-linked (GlcNAc) serine; alternate glycosylation. Ser106 is subject to Phosphoserine. 3 positions are modified to N6-acetyllysine: Lys123, Lys126, and Lys132. Thr134 bears the Phosphothreonine mark. Lys161 is modified (N6-acetyllysine; alternate). Residue Lys161 is modified to N6-succinyllysine; alternate. At Ser166 the chain carries Phosphoserine. At Lys167 the chain carries N6-acetyllysine; alternate. Lys167 is modified (N6-succinyllysine; alternate). A Phosphoserine modification is found at Ser184. An Omega-N-methylarginine modification is found at Arg204. ATP contacts are provided by Gln215, Gly217, Lys218, Thr219, and Ser220. Residue Thr219 coordinates Mg(2+). Residues Lys230 and Lys239 each carry the N6-acetyllysine; alternate modification. 2 positions are modified to N6-succinyllysine; alternate: Lys230 and Lys239. At Lys240 the chain carries N6-acetyllysine. 2 positions are modified to N6-acetyllysine; alternate: Lys261 and Lys305. Residues Lys261 and Lys305 each carry the N6-succinyllysine; alternate modification. Residue Asp312 participates in Mg(2+) binding. At Lys427 the chain carries N6-acetyllysine; alternate. An N6-succinyllysine; alternate modification is found at Lys427. Lys434 is modified (N6-acetyllysine). Residues Gln473 and Gln475 each coordinate ATP. N6-acetyllysine; alternate occurs at positions 498, 506, 531, and 539. N6-succinyllysine; alternate occurs at positions 498, 506, 531, and 539. At Lys541 the chain carries N6-acetyllysine.

Belongs to the ATPase alpha/beta chains family. Homotrimer. Component of the ATP synthase complex composed at least of ATP5F1A/subunit alpha, ATP5F1B/subunit beta, ATP5MC1/subunit c (homooctomer), MT-ATP6/subunit a, MT-ATP8/subunit 8, ATP5ME/subunit e, ATP5MF/subunit f, ATP5MG/subunit g, ATP5MK/subunit k, ATP5MJ/subunit j, ATP5F1C/subunit gamma, ATP5F1D/subunit delta, ATP5F1E/subunit epsilon, ATP5PF/subunit F6, ATP5PB/subunit b, ATP5PD/subunit d, ATP5PO/subunit OSCP. ATP synthase complex consists of a soluble F(1) head domain (subunits alpha(3) and beta(3)) - the catalytic core - and a membrane F(0) domain - the membrane proton channel (subunits c, a, 8, e, f, g, k and j). These two domains are linked by a central stalk (subunits gamma, delta, and epsilon) rotating inside the F1 region and a stationary peripheral stalk (subunits F6, b, d, and OSCP). Interacts with ATPAF2. Interacts with HRG; the interaction occurs on the surface of T-cells and alters the cell morphology when associated with concanavalin (in vitro). Interacts with PLG (angiostatin peptide); the interaction inhibits most of the angiogenic properties of angiostatin. Interacts with BLOC1S1. Interacts with BCL2L1 isoform BCL-X(L); the interaction mediates the association of BCL2L1 isoform BCL-X(L) with the mitochondrial membrane F(1)F(0) ATP synthase and enhances neurons metabolic efficiency. Interacts with CLN5 and PPT1. Interacts with S100A1; this interaction increases F1-ATPase activity. Interacts with ABCB7; this interaction allows the regulation of cellular iron homeostasis and cellular reactive oxygen species (ROS) levels in cardiomyocytes. Post-translationally, acetylated on lysine residues. BLOC1S1 is required for acetylation.

The protein localises to the mitochondrion inner membrane. It localises to the cell membrane. In terms of biological role, subunit alpha, of the mitochondrial membrane ATP synthase complex (F(1)F(0) ATP synthase or Complex V) that produces ATP from ADP in the presence of a proton gradient across the membrane which is generated by electron transport complexes of the respiratory chain. ATP synthase complex consist of a soluble F(1) head domain - the catalytic core - and a membrane F(1) domain - the membrane proton channel. These two domains are linked by a central stalk rotating inside the F(1) region and a stationary peripheral stalk. During catalysis, ATP synthesis in the catalytic domain of F(1) is coupled via a rotary mechanism of the central stalk subunits to proton translocation. In vivo, can only synthesize ATP although its ATP hydrolase activity can be activated artificially in vitro. With the catalytic subunit beta (ATP5F1B), forms the catalytic core in the F(1) domain. Subunit alpha does not bear the catalytic high-affinity ATP-binding sites. This chain is ATP synthase F(1) complex subunit alpha, mitochondrial, found in Pan troglodytes (Chimpanzee).